The following is a 641-amino-acid chain: Protein BCAP (641 aa).

4 coiled-coil regions span residues 83–144 (HWPV…KQND), 191–270 (EKDN…RKLE), 299–375 (QKQK…EREQ), and 487–599 (FKLE…TLNA).

This sequence belongs to the ODF2 family.

It is found in the cytoplasm. The protein localises to the cytoskeleton. Its subcellular location is the microtubule organizing center. The protein resides in the centrosome. It localises to the centriole. It is found in the centriolar satellite. The protein localises to the cilium basal body. In terms of biological role, acts as a suppressor of ciliogenesis, specifically, the initiation of ciliogenesis. The protein is Protein BCAP (odf2l) of Xenopus laevis (African clawed frog).